The sequence spans 209 residues: UPF0502 protein mll4256 (209 aa).

The protein belongs to the UPF0502 family.

This chain is UPF0502 protein mll4256, found in Mesorhizobium japonicum (strain LMG 29417 / CECT 9101 / MAFF 303099) (Mesorhizobium loti (strain MAFF 303099)).